The primary structure comprises 493 residues: Cysteine--tRNA ligase (493 aa).

Residue Cys29 participates in Zn(2+) binding. The 'HIGH' region signature appears at 31–41 (VTVYDLCHLGH). Positions 213, 238, and 242 each coordinate Zn(2+). A 'KMSKS' region motif is present at residues 270–274 (KMSKS). Lys273 provides a ligand contact to ATP.

It belongs to the class-I aminoacyl-tRNA synthetase family. Monomer. The cofactor is Zn(2+).

The protein localises to the cytoplasm. It catalyses the reaction tRNA(Cys) + L-cysteine + ATP = L-cysteinyl-tRNA(Cys) + AMP + diphosphate. The sequence is that of Cysteine--tRNA ligase from Parasynechococcus marenigrum (strain WH8102).